We begin with the raw amino-acid sequence, 672 residues long: Threonine--tRNA ligase (672 aa).

Residues 1–64 (MTELLKISLP…EGDAELALIT (64 aa)) enclose the TGS domain. A catalytic region spans residues 257–566 (DHRKLGREMD…LIEHFAGRLP (310 aa)). 3 residues coordinate Zn(2+): C362, H413, and H543.

This sequence belongs to the class-II aminoacyl-tRNA synthetase family. In terms of assembly, homodimer. Requires Zn(2+) as cofactor.

The protein localises to the cytoplasm. The catalysed reaction is tRNA(Thr) + L-threonine + ATP = L-threonyl-tRNA(Thr) + AMP + diphosphate + H(+). In terms of biological role, catalyzes the attachment of threonine to tRNA(Thr) in a two-step reaction: L-threonine is first activated by ATP to form Thr-AMP and then transferred to the acceptor end of tRNA(Thr). Also edits incorrectly charged L-seryl-tRNA(Thr). The sequence is that of Threonine--tRNA ligase from Erythrobacter litoralis (strain HTCC2594).